A 308-amino-acid chain; its full sequence is Apolipoprotein E (308 aa).

Positions 1 to 18 (MKFLWAALVVTLLAGCRA) are cleaved as a signal peptide. Repeat copies occupy residues 75-96 (LLIE…KQVG), 97-118 (PIAQ…ARLE), 119-140 (SDME…AALG), 141-162 (QNTD…KRLL), 163-184 (RDAE…EAAE), 185-206 (RGVS…LQAI), 207-224 (PPSQ…QKVR), and 225-246 (GRLE…DQME). Residues 75-246 (LLIEETMKEV…RLDDMRDQME (172 aa)) are 8 X 22 AA approximate tandem repeats. Residues 153 to 163 (HLRKLRKRLLR) form an LDL and other lipoprotein receptors binding region. 157–160 (LRKR) contacts heparin. Positions 205-281 (AIPPSQQLRE…SWFEPLVQDM (77 aa)) are lipid-binding and lipoprotein association. Position 220–227 (220–227 (GQKVRGRL)) interacts with heparin. The tract at residues 257–308 (SQVRLQAEAFQTRLKSWFEPLVQDMQRQWASLVEKVQSTLGISPSTKPSKTK) is homooligomerization. The tract at residues 269-281 (RLKSWFEPLVQDM) is specificity for association with VLDL.

The protein belongs to the apolipoprotein A1/A4/E family. In terms of assembly, homotetramer. May interact with ABCA1; functionally associated with ABCA1 in the biogenesis of HDLs. May interact with APP/A4 amyloid-beta peptide; the interaction is extremely stable in vitro but its physiological significance is unclear. May interact with MAPT. May interact with MAP2. In the cerebrospinal fluid, interacts with secreted SORL1. Interacts with PMEL; this allows the loading of PMEL luminal fragment on ILVs to induce fibril nucleation. APOE exists as multiple glycosylated and sialylated glycoforms within cells and in plasma. The extent of glycosylation and sialylation are tissue and context specific. In terms of processing, glycated in plasma VLDL. Post-translationally, phosphorylated by FAM20C in the extracellular medium.

The protein localises to the secreted. Its subcellular location is the extracellular space. The protein resides in the extracellular matrix. It is found in the extracellular vesicle. It localises to the endosome. The protein localises to the multivesicular body. APOE is an apolipoprotein, a protein associating with lipid particles, that mainly functions in lipoprotein-mediated lipid transport between organs via the plasma and interstitial fluids. APOE is a core component of plasma lipoproteins and is involved in their production, conversion and clearance. Apolipoproteins are amphipathic molecules that interact both with lipids of the lipoprotein particle core and the aqueous environment of the plasma. As such, APOE associates with chylomicrons, chylomicron remnants, very low density lipoproteins (VLDL) and intermediate density lipoproteins (IDL) but shows a preferential binding to high-density lipoproteins (HDL). It also binds a wide range of cellular receptors including the LDL receptor/LDLR and the very low-density lipoprotein receptor/VLDLR that mediate the cellular uptake of the APOE-containing lipoprotein particles. Finally, APOE also has a heparin-binding activity and binds heparan-sulfate proteoglycans on the surface of cells, a property that supports the capture and the receptor-mediated uptake of APOE-containing lipoproteins by cells. The polypeptide is Apolipoprotein E (APOE) (Pteropus pselaphon (Bonin flying fox)).